Here is a 591-residue protein sequence, read N- to C-terminus: Adsorption protein P2 (591 aa).

The cysteines at positions 254 and 277 are disulfide-linked.

The protein localises to the virion. Functionally, adsorption protein. In association with P31 and trimeric P5, forms the spike complexes located at the 5-fold vertices of the capsid. Involved in recognition and attachment to the receptor on the surface of the host. Likely triggers the processes of vertex disassembly, membrane tube formation, and subsequent DNA injection. Essential for viral infectivity. This Acinetobacter calcoaceticus (Arthrobacter siderocapsulatus) protein is Adsorption protein P2 (II).